The sequence spans 80 residues: Diphthamide biosynthesis protein 3 (80 aa).

The DPH-type MB domain maps to 4–60 (FHDEVEIEDFEFDEEKDVYHYPCPCGDRFEIPREMLEMGEDVAQCPSCSLLIRVIYD). The Fe cation site is built by Cys-26, Cys-28, Cys-48, and Cys-51.

It belongs to the DPH3 family. In terms of assembly, component of the 2-(3-amino-3-carboxypropyl)histidine synthase complex composed of dph-1, dph-2, dph-3 and a NADH-dependent reductase. The cofactor is Fe(2+).

It catalyses the reaction [3Fe-4S](1+)-[protein] + Fe(2+)-[Dph3] = [3Fe-4S](0)-[protein] + Fe(3+)-[Dph3]. It carries out the reaction 2 [3Fe-4S](0)-[protein] + 2 Fe(2+)-[Dph3] + NADH = 2 [4Fe-4S](1+)-[protein] + 2 [Dph3] + NAD(+) + H(+). It participates in protein modification; peptidyl-diphthamide biosynthesis. Required for the first step of diphthamide biosynthesis, a post-translational modification of histidine which occurs in elongation factor 2. Dph-1 and dph-2 transfer a 3-amino-3-carboxypropyl (ACP) group from S-adenosyl-L-methionine (SAM) to a histidine residue, the reaction is assisted by a reduction system comprising dph-3 and a NADH-dependent reductase. Acts as an electron donor to reduce the Fe-S cluster in dph1-dph2 keeping the [4Fe-4S] clusters in the active and reduced state. Restores iron to dph-1-dph-2 iron-sulfur clusters which have degraded from [4Fe-4S] to [3Fe-4S] by donating an iron atom to reform [4Fe-4S] clusters, in a manner dependent on the presence of elongation factor 2 and SAM. Associates with the elongator complex and is required for tRNA Wobble base modifications mediated by the elongator complex. The elongator complex is required for multiple tRNA modifications, including mcm5U (5-methoxycarbonylmethyl uridine), mcm5s 2U (5-methoxycarbonylmethyl-2-thiouridine), and ncm5U (5-carbamoylmethyl uridine). The chain is Diphthamide biosynthesis protein 3 from Caenorhabditis elegans.